The following is a 307-amino-acid chain: Chlorophyll a-b binding protein 1, chloroplastic (307 aa).

The transit peptide at 1-44 directs the protein to the chloroplast; that stretch reads MAPYSVVASVLAAAPPQQSGSVRQLPSTINRAITQRSQSRHVAS. The disordered stretch occupies residues 34–54; it reads TQRSQSRHVASASSASSPTTM. Residues Thr52, Glu63, Ile64, Gly65, Tyr68, Leu81, Pro86, Arg89, Gly90, Phe91, and Asp92 each coordinate chlorophyll a. Leu96 lines the loroxanthin pocket. A helical transmembrane segment spans residues 111 to 143; it reads NYDESRLRWLLEGELYNGRLAMLAVVGVLTVEA. Chlorophyll a-binding residues include Leu120, Glu124, Asn127, Met132, and Lys146. Trp149 is a loroxanthin binding site. Chlorophyll a contacts are provided by Glu151, Tyr163, His171, Glu178, Arg181, Glu190, Arg198, and Asp200. The helical transmembrane segment at 161–186 threads the bilayer; that stretch reads TPYVVAVVGGHLAFALLEKKRLENFR. Positions 200 and 202 each coordinate all-trans-violaxanthin. Residues Leu204, Asn208, Tyr214, Asn215, Ala218, Asn222, and Arg224 each coordinate chlorophyll a. Residues 213–238 form a helical membrane-spanning segment; it reads DYNRQAEVRNCRLAMLTFLGFSVQAW. Loroxanthin is bound at residue Phe230. Phe233 contributes to the all-trans-violaxanthin binding site. A chlorophyll a-binding site is contributed by Gln236. Pro244 is a binding site for all-trans-violaxanthin. Asn247, His251, Pro255, Phe256, Ala258, Asn259, Ile260, and Phe274 together coordinate chlorophyll a. The helical transmembrane segment at 265 to 289 threads the bilayer; the sequence is DRGTNVVAIFSAFAAVMHIAELARE.

Belongs to the light-harvesting chlorophyll a/b-binding (LHC) protein family. As to quaternary structure, homooligomer. Component of a light-harvesting complex (LHC) consisting of 11 chlorophyll a-b binding proteins. Binds 11 chlorophylls (Chl-a and Chl-b) and the 2 carotenoids violaxanthin and loroxanthin. is required as a cofactor.

The protein resides in the plastid. Its subcellular location is the chloroplast thylakoid membrane. Its function is as follows. Component of a light-harvesting complex (LHC). The LHC functions as a light receptor, it captures and delivers excitation energy to photosystems with which it is closely associated. Functions in a far-red LHC by absorbing far-red light and promoting photosystem II (PSII) excitation, likely with entropy-driven uphill excitation energy transfer. Exhibits a typical absorption band at 671 nm (Qy band), as well as a large far-red absorption band at 706.5 together with fluorescence emission at around 713 nm (F713). The chain is Chlorophyll a-b binding protein 1, chloroplastic from Prasiola crispa (Green alga).